We begin with the raw amino-acid sequence, 159 residues long: uncharacterized protein (159 aa).

This is an uncharacterized protein from Bacillus subtilis (strain 168).